A 288-amino-acid polypeptide reads, in one-letter code: MQIITNPREMQNIAENLRMKHQLIAVVMTMGALHEGHLSLIKLAKQQAGTVILTIFVNPAQFGENEDFHCYPRPFEKDSSMARAAEVDYLFAPDASMMYPEGFQTGIHNGPVAAILEGEHRPDHFNGVSTVVLKLMMICKAHIAVFGEKDAQQLAVIKRMTNDLNIDIRILEAPLLRDDDGVAISSRNIYLSSEERKQAAVLFRALSLADKRIQEGCTAAEKLIDEAISLIEQEPDAKIDYVSIVEAESFTQSALLEPGKEYRMVLAIWIGTTRLIDNRKYRVPLISA.

30-37 (MGALHEGH) serves as a coordination point for ATP. H37 (proton donor) is an active-site residue. (R)-pantoate is bound at residue Q61. Q61 provides a ligand contact to beta-alanine. 147 to 150 (GEKD) is an ATP binding site. Residue Q153 participates in (R)-pantoate binding. ATP contacts are provided by residues L176 and 184-187 (ISSR).

This sequence belongs to the pantothenate synthetase family. As to quaternary structure, homodimer.

It localises to the cytoplasm. The catalysed reaction is (R)-pantoate + beta-alanine + ATP = (R)-pantothenate + AMP + diphosphate + H(+). Its pathway is cofactor biosynthesis; (R)-pantothenate biosynthesis; (R)-pantothenate from (R)-pantoate and beta-alanine: step 1/1. Its function is as follows. Catalyzes the condensation of pantoate with beta-alanine in an ATP-dependent reaction via a pantoyl-adenylate intermediate. In Prosthecochloris aestuarii (strain DSM 271 / SK 413), this protein is Pantothenate synthetase.